Consider the following 86-residue polypeptide: Large ribosomal subunit protein bL27c (86 aa).

The tract at residues 1-27 is disordered; that stretch reads MAHKKGSGSTRNGRDSNSKRLGVKKYG.

It belongs to the bacterial ribosomal protein bL27 family.

Its subcellular location is the plastid. The protein localises to the chloroplast. The protein is Large ribosomal subunit protein bL27c of Pyropia yezoensis (Susabi-nori).